Here is a 630-residue protein sequence, read N- to C-terminus: Arginine--tRNA ligase (630 aa).

The short motif at 120-130 (ANPIHPLHIGH) is the 'HIGH' region element.

This sequence belongs to the class-I aminoacyl-tRNA synthetase family.

It localises to the cytoplasm. The catalysed reaction is tRNA(Arg) + L-arginine + ATP = L-arginyl-tRNA(Arg) + AMP + diphosphate. In Pyrobaculum arsenaticum (strain DSM 13514 / JCM 11321 / PZ6), this protein is Arginine--tRNA ligase.